An 806-amino-acid polypeptide reads, in one-letter code: Polyribonucleotide nucleotidyltransferase (806 aa).

Residues aspartate 488 and aspartate 494 each contribute to the Mg(2+) site. Residues 555–614 (PQIRTVQIPTDKIRDLIGPGGKTIRGIIEATQVKIDVDDTGRVNIASSDEEGLKKALAMI) enclose the KH domain. The S1 motif domain maps to 624–691 (GKTYLGKVVR…EGNRIKLSRK (68 aa)). The interval 698 to 806 (RQKLGLPEPG…QGGGGNRGPQ (109 aa)) is disordered. Low complexity predominate over residues 704–717 (PEPGAEAPAAAEGQ). Positions 738–757 (GGEDFDDFDEEGGEGEGEDE) are enriched in acidic residues. Over residues 758–774 (NFNREDTPNSAPGERRP) the composition is skewed to basic and acidic residues. The segment covering 783–792 (RGRRRRRGRG) has biased composition (basic residues). The span at 793-806 (RGPGQGGGGNRGPQ) shows a compositional bias: gly residues.

Belongs to the polyribonucleotide nucleotidyltransferase family. The cofactor is Mg(2+).

The protein localises to the cytoplasm. The catalysed reaction is RNA(n+1) + phosphate = RNA(n) + a ribonucleoside 5'-diphosphate. Functionally, involved in mRNA degradation. Catalyzes the phosphorolysis of single-stranded polyribonucleotides processively in the 3'- to 5'-direction. This is Polyribonucleotide nucleotidyltransferase from Acidobacterium capsulatum (strain ATCC 51196 / DSM 11244 / BCRC 80197 / JCM 7670 / NBRC 15755 / NCIMB 13165 / 161).